The chain runs to 369 residues: Mitogen-activated protein kinase 4 (369 aa).

The region spanning 32–319 (YVPIKPIGRG…VTEALEHPYM (288 aa)) is the Protein kinase domain. Residues 38 to 46 (IGRGAYGIV) and Lys61 contribute to the ATP site. The active-site Proton acceptor is Asp158. Phosphothreonine is present on Thr191. A TXY motif is present at residues 191-193 (TEY). Tyr193 carries the phosphotyrosine modification.

It belongs to the protein kinase superfamily. CMGC Ser/Thr protein kinase family. MAP kinase subfamily. Post-translationally, dually phosphorylated on Thr-191 and Tyr-193, which activates the enzyme. As to expression, expressed in leaves and panicles.

It carries out the reaction L-seryl-[protein] + ATP = O-phospho-L-seryl-[protein] + ADP + H(+). The catalysed reaction is L-threonyl-[protein] + ATP = O-phospho-L-threonyl-[protein] + ADP + H(+). Its activity is regulated as follows. Activated by threonine and tyrosine phosphorylation. This Oryza sativa subsp. japonica (Rice) protein is Mitogen-activated protein kinase 4 (MPK4).